A 425-amino-acid polypeptide reads, in one-letter code: Proteinase-activated receptor 1 (425 aa).

The first 21 residues, 1 to 21 (MGPRRLLLVAACLCLCGPLLS), serve as a signal peptide directing secretion. Positions 22–41 (ARTRARRPASKATNATLDPR) are cleaved as a propeptide — removed for receptor activation. Residues Asn35, Asn62, and Asn75 are each glycosylated (N-linked (GlcNAc...) asparagine). Over 42-102 (SFLLRNPNDK…SGYLTSSWLT (61 aa)) the chain is Extracellular. The helical transmembrane segment at 103 to 128 (LFVPSVYTGVFVVSLPVNIMAIVVFI) threads the bilayer. Residues 129 to 137 (LKMKVKKPA) are Cytoplasmic-facing. Residues 138 to 157 (VVYMLHLATADVLFVSVLPF) form a helical membrane-spanning segment. Over 158–176 (KISYYLSGSDWQFGSELCR) the chain is Extracellular. Cysteines 175 and 254 form a disulfide. A helical transmembrane segment spans residues 177–198 (FVTAAFYCNMYASILLMTVISI). The Cytoplasmic portion of the chain corresponds to 199–218 (DRFLAVVYPMQSLSWRTLGR). Residues 219-239 (ASFTCLAIWALAIAGVVPLLL) form a helical membrane-spanning segment. Over 240-268 (KEQTIQVPGLNITTCHDVLNETLLEGYYA) the chain is Extracellular. 2 N-linked (GlcNAc...) asparagine glycosylation sites follow: Asn250 and Asn259. The chain crosses the membrane as a helical span at residues 269–288 (YYFSAFSAVFFFVPLIISTV). Over 289-311 (CYVSIIRCLSSSTVANRSKKSRA) the chain is Cytoplasmic. A helical membrane pass occupies residues 312 to 334 (LFLSAAVFCIFIICFGPTNILLI). The Extracellular portion of the chain corresponds to 335–350 (AHYSFLSHTSTTEAAY). A helical transmembrane segment spans residues 351-374 (FAYLLCVCVSSISCCIDPLIYYYA). At 375–425 (SSECQRYVYSILCCKESSDPSSSNSSGQLMASKMDTCSSNLNNSIYKKLLT) the chain is on the cytoplasmic side. Position 418 is a phosphoserine (Ser418).

The protein belongs to the G-protein coupled receptor 1 family. Post-translationally, proteolytic cleavage by thrombin generates a new N-terminus that functions as a tethered ligand. Also proteolytically cleaved by cathepsin CTSG. Cleavage at 41-Arg-|-Ser-42 by CTSG results in receptor activation while cleavage at 55-Phe-|-Trp-56 results in inhibition of receptor activation. Phosphorylated in the C-terminal tail; probably mediating desensitization prior to the uncoupling and internalization of the receptor.

It localises to the cell membrane. In terms of biological role, high affinity receptor that binds the activated thrombin, leading to calcium release from intracellular stores. The thrombin-activated receptor signaling pathway is mediated through PTX-insensitive G proteins, activation of phospholipase C resulting in the production of 1D-myo-inositol 1,4,5-trisphosphate (InsP3) which binds to InsP3 receptors causing calcium release from the stores. In astrocytes, the calcium released into the cytosol allows the Ca(2+)-dependent release of L-glutamate into the synaptic cleft through BEST1, that targets the neuronal postsynaptic GRIN2A/NMDAR receptor resulting in the synaptic plasticity regulation. May play a role in platelets activation and in vascular development. Mediates up-regulation of pro-inflammatory cytokines, such as MCP-1/CCL2 and IL6, triggered by coagulation factor Xa (F10) in cardiac fibroblasts and umbilical vein endothelial cells. This chain is Proteinase-activated receptor 1, found in Papio hamadryas (Hamadryas baboon).